The following is a 551-amino-acid chain: Chaperonin GroEL (551 aa).

Residues 29–32 (TMGP), lysine 50, 86–90 (DGTTT), glycine 414, 478–480 (NAA), and aspartate 494 each bind ATP.

Belongs to the chaperonin (HSP60) family. Forms a cylinder of 14 subunits composed of two heptameric rings stacked back-to-back. Interacts with the co-chaperonin GroES.

The protein localises to the cytoplasm. It carries out the reaction ATP + H2O + a folded polypeptide = ADP + phosphate + an unfolded polypeptide.. Functionally, together with its co-chaperonin GroES, plays an essential role in assisting protein folding. The GroEL-GroES system forms a nano-cage that allows encapsulation of the non-native substrate proteins and provides a physical environment optimized to promote and accelerate protein folding. This is Chaperonin GroEL from Legionella jeonii.